We begin with the raw amino-acid sequence, 528 residues long: Equilibrative nucleoside transporter 4 (528 aa).

Residues Met1–His68 are Extracellular-facing. The helical transmembrane segment at Ala69–Ile89 threads the bilayer. Over Thr90–Gly101 the chain is Cytoplasmic. A helical membrane pass occupies residues Thr102–Leu122. The Extracellular portion of the chain corresponds to Asn123 to Gly139. Residues Tyr140 to Phe160 form a helical membrane-spanning segment. The Cytoplasmic portion of the chain corresponds to Ser161–Tyr166. Residues Ala167–Phe187 form a helical membrane-spanning segment. The Extracellular segment spans residues Tyr188 to Thr231. The chain crosses the membrane as a helical span at residues Ile232–Val252. The Cytoplasmic segment spans residues Arg253–Arg346. A helical transmembrane segment spans residues Val347–Pro367. At Gly368–Cys376 the chain is on the extracellular side. A helical membrane pass occupies residues Val377 to Gly397. The Cytoplasmic segment spans residues Lys398–His411. Residues Leu412–Pro432 form a helical membrane-spanning segment. Topologically, residues Ser433–Cys445 are extracellular. The helical transmembrane segment at Val446–Ala466 threads the bilayer. Residues Ala467–Thr481 are Cytoplasmic-facing. Residues Met482–Thr504 form a helical membrane-spanning segment. The Extracellular portion of the chain corresponds to Arg505–Pro528. N-linked (GlcNAc...) asparagine glycosylation occurs at Asn521.

The protein belongs to the SLC29A/ENT transporter (TC 2.A.57) family. Post-translationally, N-glycosylated. In terms of tissue distribution, expressed in heart. Expressed in choroid plexus.

It is found in the cell membrane. The protein localises to the apical cell membrane. The enzyme catalyses serotonin(out) = serotonin(in). It catalyses the reaction dopamine(out) = dopamine(in). It carries out the reaction (R)-noradrenaline(out) = (R)-noradrenaline(in). The catalysed reaction is (R)-adrenaline(out) = (R)-adrenaline(in). The enzyme catalyses histamine(out) = histamine(in). It catalyses the reaction tyramine(in) = tyramine(out). It carries out the reaction guanidine(out) = guanidine(in). The catalysed reaction is adenine(out) = adenine(in). The enzyme catalyses adenosine(in) = adenosine(out). Its activity is regulated as follows. Activated at acidic pH. Its function is as follows. Electrogenic voltage-dependent transporter that mediates the transport of a variety of endogenous bioactive amines, cationic xenobiotics and drugs. Utilizes the physiologic inside-negative membrane potential as a driving force to facilitate cellular uptake of organic cations. Functions as a Na(+)- and Cl(-)-independent bidirectional transporter. Substrate transport is pH-dependent and enhanced under acidic condition, which is most likely the result of allosteric changes in the transporter structure. Implicated in monoamine neurotransmitters uptake such as serotonin, dopamine, adrenaline/epinephrine, noradrenaline/norepinephrine, histamine and tyramine, thereby supporting a role in homeostatic regulation of aminergic neurotransmission in the central nervous system. Also responsible for the uptake of bioactive amines and drugs through the blood-cerebrospinal fluid (CSF) barrier, from the CSF into choroid plexus epithelial cells, thereby playing a significant role in the clearance of cationic neurotoxins, xenobiotics and metabolic waste in the brain. Involved in bidirectional transport of the purine nucleoside adenosine and plays a role in the regulation of extracellular adenosine concentrations in cardiac tissues, in particular during ischemia. May be involved in organic cation uptake from the tubular lumen into renal tubular cells, thereby contributing to organic cation reabsorption in the kidney. Also transports adenine and guanidine. The protein is Equilibrative nucleoside transporter 4 of Mus musculus (Mouse).